The sequence spans 380 residues: Cytochrome b (380 aa).

The next 4 helical transmembrane spans lie at 34–54, 78–99, 114–134, and 179–199; these read FGSL…LLAM, WLIR…YLHI, WNTG…GYVL, and FFAL…IHLT. Residues H84 and H98 each contribute to the heme b site. Residues H183 and H197 each contribute to the heme b site. H202 lines the a ubiquinone pocket. 4 consecutive transmembrane segments (helical) span residues 227–247, 289–309, 321–341, and 348–368; these read SKDI…ALLS, LGGV…PFLH, LSQA…WIGS, and FIII…ILLP.

Belongs to the cytochrome b family. The cytochrome bc1 complex contains 11 subunits: 3 respiratory subunits (MT-CYB, CYC1 and UQCRFS1), 2 core proteins (UQCRC1 and UQCRC2) and 6 low-molecular weight proteins (UQCRH/QCR6, UQCRB/QCR7, UQCRQ/QCR8, UQCR10/QCR9, UQCR11/QCR10 and a cleavage product of UQCRFS1). This cytochrome bc1 complex then forms a dimer. Requires heme b as cofactor.

The protein resides in the mitochondrion inner membrane. Its function is as follows. Component of the ubiquinol-cytochrome c reductase complex (complex III or cytochrome b-c1 complex) that is part of the mitochondrial respiratory chain. The b-c1 complex mediates electron transfer from ubiquinol to cytochrome c. Contributes to the generation of a proton gradient across the mitochondrial membrane that is then used for ATP synthesis. The protein is Cytochrome b (MT-CYB) of Phalcoboenus australis (Striated caracara).